The following is a 584-amino-acid chain: Inactive metallocarboxypeptidase ECM14 (584 aa).

The N-terminal stretch at 1-20 (MHLLPVITAVALIYTPLASA) is a signal peptide. A propeptide spanning residues 21-174 (VPSSSNPQFP…QAVYESYPQP (154 aa)) is cleaved from the precursor. Residues 202–524 (DYQPLSVMTP…NAVLEFGKFL (323 aa)) enclose the Peptidase M14 domain. 2 residues coordinate Zn(2+): His267 and Glu270. Substrate contacts are provided by residues 267-270 (HARE), Arg325, and 342-343 (DR). Cys336 and Cys359 are oxidised to a cystine. N-linked (GlcNAc...) asparagine glycans are attached at residues Asn383 and Asn389. His399 serves as a coordination point for Zn(2+). 400-401 (SY) provides a ligand contact to substrate. Residues 564-584 (QQLDDEDGEADSHWVLRTQRS) are disordered.

The protein belongs to the peptidase M14 family. Requires Zn(2+) as cofactor.

It localises to the vacuole. The protein localises to the secreted. Inactive carboxypeptidase that may play a role in cell wall organization and biogenesis. The polypeptide is Inactive metallocarboxypeptidase ECM14 (ECM14) (Uncinocarpus reesii (strain UAMH 1704)).